The chain runs to 189 residues: Inner membrane-spanning protein YciB (189 aa).

Helical transmembrane passes span Phe4 to Ile24, Ile53 to Phe73, Trp76 to Tyr96, Met121 to Leu141, and Phe149 to Ile169.

This sequence belongs to the YciB family.

It is found in the cell inner membrane. In terms of biological role, plays a role in cell envelope biogenesis, maintenance of cell envelope integrity and membrane homeostasis. The sequence is that of Inner membrane-spanning protein YciB from Psychromonas ingrahamii (strain DSM 17664 / CCUG 51855 / 37).